A 504-amino-acid chain; its full sequence is ATP synthase subunit alpha, chloroplastic (504 aa).

An ATP-binding site is contributed by 169–176; the sequence is GDRQTGKT.

Belongs to the ATPase alpha/beta chains family. As to quaternary structure, F-type ATPases have 2 components, CF(1) - the catalytic core - and CF(0) - the membrane proton channel. CF(1) has five subunits: alpha(3), beta(3), gamma(1), delta(1), epsilon(1). CF(0) has four main subunits: a, b, b' and c.

It localises to the plastid. The protein localises to the chloroplast thylakoid membrane. The enzyme catalyses ATP + H2O + 4 H(+)(in) = ADP + phosphate + 5 H(+)(out). In terms of biological role, produces ATP from ADP in the presence of a proton gradient across the membrane. The alpha chain is a regulatory subunit. This is ATP synthase subunit alpha, chloroplastic from Stigeoclonium helveticum (Green alga).